The primary structure comprises 1687 residues: A-kinase anchor protein SPHKAP (1687 aa).

The span at 1 to 14 shows a compositional bias: polar residues; that stretch reads MDVNSRLSVQSNVE. Disordered regions lie at residues 1-25 and 272-293; these read MDVN…PEPQ and RKHR…ENTS. The interval 914-931 is PKA-RII subunit binding domain; the sequence is FAEELAETVVSMATEIAA. The segment at 964–989 is disordered; sequence LKRKKENSSAGSTVRKHKPPRLSEIK. A phosphoserine mark is found at serine 1010, serine 1070, serine 1092, serine 1105, serine 1106, serine 1109, serine 1244, and serine 1273. Disordered stretches follow at residues 1363-1406 and 1421-1520; these read VTEG…SPRR and DQKE…PDDT. Residues 1366 to 1375 are compositionally biased toward polar residues; it reads GNHSPVSSPG. A compositionally biased stretch (basic and acidic residues) spans 1382 to 1393; sequence KPSDFDPRRETS. Over residues 1461-1470 the composition is skewed to polar residues; that stretch reads TAPSTCQSSR. Positions 1482 to 1494 are enriched in basic and acidic residues; the sequence is EVLKEDIPRDESR. Positions 1495 to 1508 are enriched in low complexity; sequence NPPSSSEESTGSWS.

This sequence belongs to the AKAP110 family. Interacts (via the PKA-RII subunit binding domain) with the RI subunit of PKA. Interacts with SPHK1; the interaction greatly reduces SPHK1 activity.

The protein resides in the cytoplasm. Its function is as follows. Anchoring protein that binds preferentially to the type I regulatory subunit of c-AMP-dependent protein kinase (PKA type I) and targets it to distinct subcellular compartments. May act as a converging factor linking cAMP and sphingosine signaling pathways. Plays a regulatory role in the modulation of SPHK1. The chain is A-kinase anchor protein SPHKAP (Sphkap) from Mus musculus (Mouse).